Consider the following 652-residue polypeptide: Chaperone protein HtpG (652 aa).

An a; substrate-binding region spans residues 1–351 (MTEHVEQLEF…AQDLSLNVSR (351 aa)). Residues 352–568 (EILQQDRQIQ…VFDFTPMLER (217 aa)) are b. The segment at 569 to 652 (MYRASGQPVP…ILTDRLTRTL (84 aa)) is c.

Belongs to the heat shock protein 90 family. In terms of assembly, homodimer.

Its subcellular location is the cytoplasm. In terms of biological role, molecular chaperone. Has ATPase activity. This is Chaperone protein HtpG from Nocardia farcinica (strain IFM 10152).